Here is a 96-residue protein sequence, read N- to C-terminus: uncharacterized protein (96 aa).

The protein resides in the mitochondrion. This is an uncharacterized protein from Schizosaccharomyces pombe (strain 972 / ATCC 24843) (Fission yeast).